A 312-amino-acid polypeptide reads, in one-letter code: R2-like ligand binding oxidase (312 aa).

Residues Glu-68, Glu-101, and His-104 each coordinate Mn(2+). The 3-(O4'-tyrosyl)-valine (Val-Tyr) cross-link spans Val-71–Tyr-162. Position 101 (Glu-101) interacts with Fe cation. The Fe cation site is built by Glu-167, Glu-202, and His-205.

It belongs to the ribonucleoside diphosphate reductase small chain family. R2-like ligand binding oxidase subfamily. In terms of assembly, homodimer. Fe cation is required as a cofactor. Requires Mn(2+) as cofactor.

In terms of biological role, probable oxidase that might be involved in lipid metabolism. This chain is R2-like ligand binding oxidase, found in Mycobacterium sp. (strain KMS).